A 60-amino-acid polypeptide reads, in one-letter code: Homeobox protein CHOX-CAD2 (60 aa).

Positions lysine 1–isoleucine 60 form a DNA-binding region, homeobox.

It belongs to the Caudal homeobox family.

It is found in the nucleus. The sequence is that of Homeobox protein CHOX-CAD2 (CHOX-CAD2) from Gallus gallus (Chicken).